The following is an 80-amino-acid chain: Exodeoxyribonuclease 7 small subunit (80 aa).

It belongs to the XseB family. As to quaternary structure, heterooligomer composed of large and small subunits.

It localises to the cytoplasm. It carries out the reaction Exonucleolytic cleavage in either 5'- to 3'- or 3'- to 5'-direction to yield nucleoside 5'-phosphates.. In terms of biological role, bidirectionally degrades single-stranded DNA into large acid-insoluble oligonucleotides, which are then degraded further into small acid-soluble oligonucleotides. The polypeptide is Exodeoxyribonuclease 7 small subunit (Edwardsiella ictaluri (strain 93-146)).